Reading from the N-terminus, the 124-residue chain is Protein BEX3 (124 aa).

The interval 1-56 is disordered; that stretch reads MANVHQENEEMEQPLQNGQEDRPVGGGEGHQPAANNNNNNHNHNHNHHRRGQARRL. A compositionally biased stretch (basic residues) spans 42 to 53; it reads NHNHNHHRRGQA. Positions 81–106 are interaction with p75NTR/NGFR; that stretch reads EMFMEEMREIRRKLRELQLRNCLRIL. The interaction with 14-3-3 epsilon stretch occupies residues 81-124; that stretch reads EMFMEEMREIRRKLRELQLRNCLRILMGELSNHHDHHDEFCLMP. The Nuclear export signal motif lies at 90 to 100; that stretch reads IRRKLRELQLR. Residues 113–117 form a his cluster region; that stretch reads HHDHH. Cysteine 121 provides a ligand contact to Zn(2+).

It belongs to the BEX family. In terms of assembly, self-associates. Binds to the DEATH domain of p75NTR/NGFR. Interacts with 14-3-3 epsilon (YWHAE). Interacts with DIABLO/SMAC. Ubiquitinated. Degraded by the proteasome. As to expression, widely expressed.

The protein localises to the nucleus. The protein resides in the cytoplasm. It is found in the cytosol. In terms of biological role, may be a signaling adapter molecule involved in NGFR/p75NTR-mediated apoptosis induced by NGF. Plays a role in zinc-triggered neuronal death. In absence of reductive stress, acts as a pseudosubstrate for the CRL2(FEM1B) complex: associates with FEM1B via zinc, thereby preventing association between FEM1B and its substrates. This is Protein BEX3 from Mus musculus (Mouse).